We begin with the raw amino-acid sequence, 323 residues long: Protein translocase subunit SecF (323 aa).

Residues 1–22 (MAQEYTVEQLNHGRKVYDFMRW) are Cytoplasmic-facing. The chain crosses the membrane as a helical span at residues 23–43 (DYWAFGISGLLLIAAIVIMGV). The Periplasmic portion of the chain corresponds to 44–142 (RGFNWGLDFT…FVGPSVGADL (99 aa)). Residues 143 to 163 (AQTGAMALMAALLSILVYVGF) traverse the membrane as a helical segment. Residues 164 to 170 (RFEWRLA) lie on the Cytoplasmic side of the membrane. A helical transmembrane segment spans residues 171–191 (AGVVIALAHDVIITLGILSLF). The Periplasmic segment spans residues 192 to 196 (HIEID). A helical membrane pass occupies residues 197–217 (LTIVASLMSVIGYSLNDSIVV). Over 218–247 (SDRIRENFRKIRRGTPYEIFNVSLTQTLHR) the chain is Cytoplasmic. A helical membrane pass occupies residues 248-270 (TLITSGTTLMVILMLYLFGGPVL). Over 271–280 (EGFSLTMLIG) the chain is Periplasmic. The helical transmembrane segment at 281–301 (VSIGTASSIYVASALALKLGM) threads the bilayer. At 302-323 (KREHMLQQKVEKEGADQPSILP) the chain is on the cytoplasmic side.

It belongs to the SecD/SecF family. SecF subfamily. Forms a complex with SecD. Part of the essential Sec protein translocation apparatus which comprises SecA, SecYEG and auxiliary proteins SecDF-YajC and YidC.

The protein localises to the cell inner membrane. Functionally, part of the Sec protein translocase complex. Interacts with the SecYEG preprotein conducting channel. SecDF uses the proton motive force (PMF) to complete protein translocation after the ATP-dependent function of SecA. The polypeptide is Protein translocase subunit SecF (Escherichia coli O157:H7).